The primary structure comprises 427 residues: Serine--tRNA ligase (427 aa).

231–233 (TAE) is a binding site for L-serine. 262-264 (RSE) contacts ATP. Position 285 (glutamate 285) interacts with L-serine. Position 349–352 (349–352 (EISS)) interacts with ATP. Serine 385 is an L-serine binding site.

This sequence belongs to the class-II aminoacyl-tRNA synthetase family. Type-1 seryl-tRNA synthetase subfamily. In terms of assembly, homodimer. The tRNA molecule binds across the dimer.

Its subcellular location is the cytoplasm. The enzyme catalyses tRNA(Ser) + L-serine + ATP = L-seryl-tRNA(Ser) + AMP + diphosphate + H(+). The catalysed reaction is tRNA(Sec) + L-serine + ATP = L-seryl-tRNA(Sec) + AMP + diphosphate + H(+). Its pathway is aminoacyl-tRNA biosynthesis; selenocysteinyl-tRNA(Sec) biosynthesis; L-seryl-tRNA(Sec) from L-serine and tRNA(Sec): step 1/1. Functionally, catalyzes the attachment of serine to tRNA(Ser). Is also able to aminoacylate tRNA(Sec) with serine, to form the misacylated tRNA L-seryl-tRNA(Sec), which will be further converted into selenocysteinyl-tRNA(Sec). The protein is Serine--tRNA ligase of Brucella abortus (strain S19).